A 453-amino-acid polypeptide reads, in one-letter code: UDP-N-acetylmuramate--L-alanine ligase (453 aa).

Gly-112–Thr-118 provides a ligand contact to ATP.

This sequence belongs to the MurCDEF family.

It is found in the cytoplasm. The catalysed reaction is UDP-N-acetyl-alpha-D-muramate + L-alanine + ATP = UDP-N-acetyl-alpha-D-muramoyl-L-alanine + ADP + phosphate + H(+). It functions in the pathway cell wall biogenesis; peptidoglycan biosynthesis. Its function is as follows. Cell wall formation. The chain is UDP-N-acetylmuramate--L-alanine ligase from Bdellovibrio bacteriovorus (strain ATCC 15356 / DSM 50701 / NCIMB 9529 / HD100).